The following is a 115-amino-acid chain: uncharacterized protein (115 aa).

Helical transmembrane passes span 6–26 (ILII…PFMV), 43–63 (ALSC…IHIL), and 84–104 (IFKV…VLVQ).

This sequence belongs to the AzlD/HI_1737/HP1330 family.

The protein resides in the cell membrane. This is an uncharacterized protein from Helicobacter pylori (strain ATCC 700392 / 26695) (Campylobacter pylori).